Reading from the N-terminus, the 282-residue chain is 2-dehydro-3-deoxyphosphooctonate aldolase (282 aa).

The protein belongs to the KdsA family.

It localises to the cytoplasm. The catalysed reaction is D-arabinose 5-phosphate + phosphoenolpyruvate + H2O = 3-deoxy-alpha-D-manno-2-octulosonate-8-phosphate + phosphate. It functions in the pathway carbohydrate biosynthesis; 3-deoxy-D-manno-octulosonate biosynthesis; 3-deoxy-D-manno-octulosonate from D-ribulose 5-phosphate: step 2/3. The protein operates within bacterial outer membrane biogenesis; lipopolysaccharide biosynthesis. This chain is 2-dehydro-3-deoxyphosphooctonate aldolase, found in Shewanella piezotolerans (strain WP3 / JCM 13877).